Reading from the N-terminus, the 191-residue chain is Pyridoxal 5'-phosphate synthase subunit PdxT (191 aa).

Residue 48 to 50 (GES) coordinates L-glutamine. Cys81 acts as the Nucleophile in catalysis. Residues Arg109 and 136 to 137 (IR) each bind L-glutamine. Catalysis depends on charge relay system residues His172 and Glu174.

It belongs to the glutaminase PdxT/SNO family. In the presence of PdxS, forms a dodecamer of heterodimers. Only shows activity in the heterodimer.

The catalysed reaction is aldehydo-D-ribose 5-phosphate + D-glyceraldehyde 3-phosphate + L-glutamine = pyridoxal 5'-phosphate + L-glutamate + phosphate + 3 H2O + H(+). It catalyses the reaction L-glutamine + H2O = L-glutamate + NH4(+). The protein operates within cofactor biosynthesis; pyridoxal 5'-phosphate biosynthesis. Catalyzes the hydrolysis of glutamine to glutamate and ammonia as part of the biosynthesis of pyridoxal 5'-phosphate. The resulting ammonia molecule is channeled to the active site of PdxS. This chain is Pyridoxal 5'-phosphate synthase subunit PdxT, found in Thermus thermophilus (strain ATCC 27634 / DSM 579 / HB8).